Reading from the N-terminus, the 800-residue chain is Phenylalanine--tRNA ligase beta subunit (800 aa).

The 116-residue stretch at 39-154 folds into the tRNA-binding domain; the sequence is SKDIKNLVVG…TEVEPGTDAL (116 aa). Residues 408-483 form the B5 domain; it reads SFVTPIDITA…RIYGYDEIPS (76 aa). The Mg(2+) site is built by Asp-461, Asp-467, Glu-470, and Glu-471. The FDX-ACB domain maps to 708-800; it reads PKFPGVTRDI…ALQAQGATIR (93 aa).

The protein belongs to the phenylalanyl-tRNA synthetase beta subunit family. Type 1 subfamily. In terms of assembly, tetramer of two alpha and two beta subunits. The cofactor is Mg(2+).

It is found in the cytoplasm. The enzyme catalyses tRNA(Phe) + L-phenylalanine + ATP = L-phenylalanyl-tRNA(Phe) + AMP + diphosphate + H(+). The sequence is that of Phenylalanine--tRNA ligase beta subunit from Staphylococcus haemolyticus (strain JCSC1435).